The following is a 225-amino-acid chain: Small ribosomal subunit protein uS3 (225 aa).

The region spanning 38 to 106 (LRAHLRRKLS…DVALNIVEIR (69 aa)) is the KH type-2 domain.

Belongs to the universal ribosomal protein uS3 family. As to quaternary structure, part of the 30S ribosomal subunit. Forms a tight complex with proteins S10 and S14.

Functionally, binds the lower part of the 30S subunit head. Binds mRNA in the 70S ribosome, positioning it for translation. The chain is Small ribosomal subunit protein uS3 from Gluconacetobacter diazotrophicus (strain ATCC 49037 / DSM 5601 / CCUG 37298 / CIP 103539 / LMG 7603 / PAl5).